Here is a 69-residue protein sequence, read N- to C-terminus: DNA-directed RNA polymerase subunit omega (69 aa).

It belongs to the RNA polymerase subunit omega family. In terms of assembly, the RNAP catalytic core consists of 2 alpha, 1 beta, 1 beta' and 1 omega subunit. When a sigma factor is associated with the core the holoenzyme is formed, which can initiate transcription.

The enzyme catalyses RNA(n) + a ribonucleoside 5'-triphosphate = RNA(n+1) + diphosphate. Promotes RNA polymerase assembly. Latches the N- and C-terminal regions of the beta' subunit thereby facilitating its interaction with the beta and alpha subunits. This chain is DNA-directed RNA polymerase subunit omega, found in Hahella chejuensis (strain KCTC 2396).